The sequence spans 456 residues: tRNA-2-methylthio-N(6)-dimethylallyladenosine synthase (456 aa).

Positions 18-134 constitute an MTTase N-terminal domain; the sequence is KKLFIETYGC…LPDLVASVEA (117 aa). The [4Fe-4S] cluster site is built by Cys27, Cys63, Cys98, Cys172, Cys176, and Cys179. The Radical SAM core domain occupies 158–390; that stretch reads CGNHISGFVS…IELQNRLSAE (233 aa). The TRAM domain occupies 393-456; it reads ARDVGKTFEV…SATLKGEEVF (64 aa).

Belongs to the methylthiotransferase family. MiaB subfamily. Monomer. The cofactor is [4Fe-4S] cluster.

It localises to the cytoplasm. It carries out the reaction N(6)-dimethylallyladenosine(37) in tRNA + (sulfur carrier)-SH + AH2 + 2 S-adenosyl-L-methionine = 2-methylsulfanyl-N(6)-dimethylallyladenosine(37) in tRNA + (sulfur carrier)-H + 5'-deoxyadenosine + L-methionine + A + S-adenosyl-L-homocysteine + 2 H(+). Functionally, catalyzes the methylthiolation of N6-(dimethylallyl)adenosine (i(6)A), leading to the formation of 2-methylthio-N6-(dimethylallyl)adenosine (ms(2)i(6)A) at position 37 in tRNAs that read codons beginning with uridine. This Phocaeicola vulgatus (strain ATCC 8482 / DSM 1447 / JCM 5826 / CCUG 4940 / NBRC 14291 / NCTC 11154) (Bacteroides vulgatus) protein is tRNA-2-methylthio-N(6)-dimethylallyladenosine synthase.